We begin with the raw amino-acid sequence, 768 residues long: Photosystem I P700 chlorophyll a apoprotein A1 (768 aa).

A run of 8 helical transmembrane segments spans residues 76 to 99, 162 to 185, 201 to 225, 310 to 328, 369 to 392, 408 to 434, 456 to 478, and 559 to 577; these read VFSAHFGHLAVIFIWMSAAFFHGA, LMALAIGALLMAAIMLHGGIYHYH, LNHHIAGLVGLGSIAWAGHCIHIGA, ISHHHLAFGVLAVLGGHLY, WHAQLGLNLAMIGSLSIIISHHMY, LGLFTHHMWIGGLFIVGAAAHAGIAMI, ALISHLNWACMFLGFHSFGLYIH, and FMIHHIHAFTIHVTLLILL. [4Fe-4S] cluster-binding residues include C601 and C610. 2 helical membrane-spanning segments follow: residues 617 to 638 and 682 to 704; these read HVFLGLFWMYNGLSVVIFHFSW and ISMYGLMFLGAHFVWAFSLMFLF. H693 lines the divinylchlorophyll a' pocket. The divinyl chlorophyll a site is built by M701 and Y709. Residue W710 participates in phylloquinone binding. The chain crosses the membrane as a helical span at residues 742–762; sequence AVGAAHFLLGGIATTWAFFHA.

It belongs to the PsaA/PsaB family. As to quaternary structure, the PsaA/B heterodimer binds the P700 divinyl chlorophyll special pair and subsequent electron acceptors. PSI consists of a core antenna complex that captures photons, and an electron transfer chain that converts photonic excitation into a charge separation. The cyanobacterial PSI reaction center is composed of one copy each of PsaA,B,C,D,E,F,I,J,K,L,M and X, and forms trimeric complexes. Requires PSI electron transfer chain: 5 divinyl chlorophyll a, 1 divinyl chlorophyll a', 2 phylloquinones and 3 4Fe-4S clusters. PSI core antenna: 90 divinyl chlorophyll a, 22 carotenoids, 3 phospholipids and 1 galactolipid. P700 is a divinyl chlorophyll a/divinyl chlorophyll a' dimer, A0 is one or more divinyl chlorophyll a, A1 is one or both phylloquinones and FX is a shared 4Fe-4S iron-sulfur center. as cofactor.

It is found in the cellular thylakoid membrane. It catalyses the reaction reduced [plastocyanin] + hnu + oxidized [2Fe-2S]-[ferredoxin] = oxidized [plastocyanin] + reduced [2Fe-2S]-[ferredoxin]. In terms of biological role, psaA and PsaB bind P700, the primary electron donor of photosystem I (PSI), as well as the electron acceptors A0, A1 and FX. PSI is a plastocyanin/cytochrome c6-ferredoxin oxidoreductase, converting photonic excitation into a charge separation, which transfers an electron from the donor P700 chlorophyll pair to the spectroscopically characterized acceptors A0, A1, FX, FA and FB in turn. Oxidized P700 is reduced on the lumenal side of the thylakoid membrane by plastocyanin or cytochrome c6. In Prochlorococcus marinus (strain NATL2A), this protein is Photosystem I P700 chlorophyll a apoprotein A1.